We begin with the raw amino-acid sequence, 1028 residues long: SWI/SNF-related matrix-associated actin-dependent regulator of chromatin subfamily A containing DEAD/H box 1 (1028 aa).

An N-acetylmethionine modification is found at M1. A disordered region spans residues 13-81 (KRNKIEEAPE…PENDRKASIS (69 aa)). T54 bears the Phosphothreonine mark. A Phosphoserine modification is found at S57. Position 71 is a phosphothreonine (T71). Residue K77 forms a Glycyl lysine isopeptide (Lys-Gly) (interchain with G-Cter in SUMO2) linkage. S79 carries the post-translational modification Phosphoserine. K84 is covalently cross-linked (Glycyl lysine isopeptide (Lys-Gly) (interchain with G-Cter in SUMO2)). 4 positions are modified to phosphoserine: S124, S127, S132, and S153. Positions 158–200 (YSDNLSTVRQTRYSENLSSDLLKLIDSTSTMDGAIAAALLMFG) constitute a CUE 1 domain. Disordered stretches follow at residues 204 to 253 (GGGP…NWEK) and 303 to 348 (ASPS…KRKK). A phosphoserine mark is found at S213, S216, S241, and S244. In terms of domain architecture, CUE 2 spans 253-296 (KQESIVLKLQKEFPNFDKEELREVLKEHEWMYTEALESLKVFAE). Residue S304 is modified to Phosphoserine. Residues K337 and K473 each participate in a glycyl lysine isopeptide (Lys-Gly) (interchain with G-Cter in SUMO2) cross-link. A Helicase ATP-binding domain is found at 511-679 (ALVHKHGLNG…MSLLNFVMPH (169 aa)). 523–531 (ADEMGLGKT) contacts ATP. The short motif at 630 to 633 (DEGH) is the DEGH box element. Positions 723-740 (RRVKEEVLKQLPPKKDRI) match the Nuclear localization signal motif. K726 is covalently cross-linked (Glycyl lysine isopeptide (Lys-Gly) (interchain with G-Cter in SUMO2)). One can recognise a Helicase C-terminal domain in the interval 860 to 1012 (VLGCILSELK…MTTVDEGDEG (153 aa)). 899-906 (YLRLDGKT) is an ATP binding site. A Glycyl lysine isopeptide (Lys-Gly) (interchain with G-Cter in SUMO2) cross-link involves residue K998. The DEAD box motif lies at 1007–1010 (DEGD).

Belongs to the SNF2/RAD54 helicase family. Binds to DNA preferentially in the vicinity of transcriptional start sites. Interacts with MSH2 and TRIM28. Part of a complex composed of TRIM28, HDAC1, HDAC2 and EHMT2. Interacts with PCNA.

It localises to the nucleus. It is found in the chromosome. The enzyme catalyses ATP + H2O = ADP + phosphate + H(+). DNA helicase that possesses intrinsic ATP-dependent nucleosome-remodeling activity and is both required for DNA repair and heterochromatin organization. Promotes DNA end resection of double-strand breaks (DSBs) following DNA damage: probably acts by weakening histone DNA interactions in nucleosomes flanking DSBs. Required for the restoration of heterochromatin organization after replication. Acts at replication sites to facilitate the maintenance of heterochromatin by directing H3 and H4 histones deacetylation, H3 'Lys-9' trimethylation (H3K9me3) and restoration of silencing. The chain is SWI/SNF-related matrix-associated actin-dependent regulator of chromatin subfamily A containing DEAD/H box 1 (SMARCAD1) from Bos taurus (Bovine).